The sequence spans 110 residues: Ig kappa chain V region 3547 (110 aa).

A framework-1 region spans residues 1–23; sequence AYDMTQTPSSVSAAVGGTVTINC. The tract at residues 24–34 is complementarity-determining-1; that stretch reads QASEDISANLA. The tract at residues 35–49 is framework-2; sequence WYQQKPGQPPKLLIY. The segment at 50–56 is complementarity-determining-2; that stretch reads AASDLAS. The framework-3 stretch occupies residues 57-88; that stretch reads GVPSRFKGSGSGTEYTLTISGVQCADAATYYC. The complementarity-determining-3 stretch occupies residues 89–99; sequence QSADYSGSAVT. The interval 100 to 109 is framework-4; sequence FGGGTEVVVK.

The polypeptide is Ig kappa chain V region 3547 (Oryctolagus cuniculus (Rabbit)).